The chain runs to 1655 residues: Protein scribble homolog (1655 aa).

The interval methionine 1–glutamate 818 is sufficient for targeting to adherens junction and to inhibit cell proliferation. Serine 37 bears the Phosphoserine mark. 16 LRR repeats span residues serine 37–leucine 58, asparagine 60–phenylalanine 81, glutamine 83–cysteine 104, alanine 106–leucine 127, serine 129–leucine 150, asparagine 152–valine 174, lysine 175–proline 197, asparagine 198–leucine 219, arginine 221–valine 243, leucine 244–leucine 265, glutamine 267–cysteine 288, asparagine 290–threonine 312, lysine 313–cysteine 334, alanine 336–threonine 357, glutamate 359–asparagine 381, and leucine 382–aspartate 402. The residue at position 378 (threonine 378) is a Phosphothreonine. Disordered stretches follow at residues proline 417–alanine 440, aspartate 459–aspartate 606, and leucine 628–proline 702. Residues glutamate 458–alanine 474 adopt a coiled-coil conformation. The residue at position 475 (threonine 475) is a Phosphothreonine. The segment covering serine 479–glutamate 494 has biased composition (basic and acidic residues). At serine 504 the chain carries Phosphoserine. Residues glutamate 537–glycine 555 show a composition bias toward low complexity. Composition is skewed to acidic residues over residues glycine 556–glutamine 565 and glutamate 660–lysine 694. Residues arginine 656–alanine 701 adopt a coiled-coil conformation. Serine 688 carries the post-translational modification Phosphoserine. Position 689 is a phosphothreonine (threonine 689). Phosphoserine occurs at positions 708 and 764. Residues isoleucine 717–arginine 1229 are interaction with ARHGEF7. Residues threonine 728–arginine 815 form the PDZ 1 domain. Residues threonine 728–alanine 1194 are required for interaction with VIM. Threonine 826 bears the Phosphothreonine mark. Residues proline 827 to serine 853 form a disordered region. Residues arginine 829–glycine 841 show a composition bias toward basic and acidic residues. A phosphoserine mark is found at serine 835, serine 853, serine 875, and serine 939. 3 consecutive PDZ domains span residues valine 862–alanine 950, glutamate 1004–proline 1093, and glutamate 1100–alanine 1194. The tract at residues lysine 1105 to glycine 1117 is interaction with tick-borne encephalitis virus RNA-directed RNA polymerase NS5. Residues serine 1140, serine 1220, serine 1223, serine 1226, serine 1232, serine 1276, serine 1279, serine 1295, serine 1298, serine 1306, and serine 1309 each carry the phosphoserine modification. Basic and acidic residues predominate over residues isoleucine 1227–leucine 1242. Positions isoleucine 1227–threonine 1246 are disordered. The segment at alanine 1277 to glutamate 1489 is disordered. Residues glutamine 1302–aspartate 1311 are compositionally biased toward pro residues. Position 1342 is a phosphothreonine (threonine 1342). Serine 1348 carries the phosphoserine modification. Residues serine 1353–valine 1365 show a composition bias toward basic and acidic residues. Serine 1378 is modified (phosphoserine). Residues leucine 1379–aspartate 1419 are a coiled coil. The span at aspartate 1383–lysine 1395 shows a compositional bias: basic and acidic residues. Residues glutamate 1409–glutamate 1421 show a composition bias toward low complexity. Positions threonine 1422–glutamine 1432 are enriched in acidic residues. Phosphoserine occurs at positions 1437, 1445, and 1448. Over residues alanine 1461 to arginine 1472 the composition is skewed to basic and acidic residues. Phosphoserine is present on residues serine 1475, serine 1486, and serine 1508. The segment at leucine 1520–serine 1568 is disordered. The segment covering glutamine 1524–alanine 1537 has biased composition (basic and acidic residues). Serine 1541 is modified (phosphoserine). Threonine 1545 bears the Phosphothreonine mark. 3 positions are modified to phosphoserine: serine 1547, serine 1561, and serine 1591. The interval glycine 1622 to serine 1655 is disordered.

The protein belongs to the LAP (LRR and PDZ) protein family. In terms of assembly, interacts with UBE3A. Interacts with PAK1 and PAK2. Interacts (via PDZ domains) with VANGL2. Interacts (via PDZ domains) with LPP and TRIP6; the interaction is direct. Interacts (via PDZ domains) with TJP2. Interacts (via PDZ domains) with APC; may mediate APC targeting to adherens junctions of epithelial cells. Interacts (via PDZ domains) with TSHR; regulates TSHR trafficking and function. Interacts with ARHGEF7 and GIT1; interacts directly with ARHGEF7. Interacts with CTNNB1. Interacts with MAPK12. Interacts (via PDZ domains 1 and 3) with MCC. Interacts with DLG5. Interacts with STK4/MST1 and LATS1 in the presence of DLG5. Interacts (via PDZ domain 3) with CRTAM (via PDZ-binding motif); the interaction promotes CRTAM and SCRIB polarization in a subset of CD4+ T-cells. Interacts with YES1, when YES1 is in a closed conformation; the interaction facilitates YES1 autophosphorylation. Interacts (via PDZ domains) with VIM; the interaction protects SCRIB from proteasomal degradation and facilitates SCRIB localization to intermediate filaments, the interaction is reduced by cell contact inhibition. (Microbial infection) Interacts (via fourth PDZ domain) with tick-borne encephalitis virus RNA-directed RNA polymerase NS5; this interaction targets viral NS5 to the cell membrane periphery and nucleus and prevents STAT1 phosphorylation, and thus, the activation of the JAK-STAT signaling pathway. Interacts with HPV E6. Interacts with influenza A virus protein NS1; the interaction results in the translocation of SCRIB from the cell membrane to perinuclear puncta. In terms of processing, ubiquitinated; targeted for UBE3A-dependent multiubiquitination in the presence of high-risk HPV E6 proteins and degraded. Palmitoylated. Could be depalmitoylated by LYPLA1 and/or LYPLA2. Palmitoylation of SCRIB by ZDHHC7 is required for its localization to cell-cell junctions, function in the establishement of epithelial cell polarity and the regulation of downstream signaling pathways important for epithelial cell differentiation. As to expression, expressed in kidney, skeletal muscles, liver, lung, breast, intestine, placenta and skin mainly in epithelial cells (at protein level).

It localises to the cell membrane. The protein resides in the cell junction. Its subcellular location is the adherens junction. The protein localises to the cell projection. It is found in the lamellipodium. It localises to the cytoplasm. The protein resides in the postsynapse. Its subcellular location is the presynapse. Scaffold protein involved in different aspects of polarized cell differentiation regulating epithelial and neuronal morphogenesis and T-cell polarization. Via its interaction with CRTAM, required for the late phase polarization of a subset of CD4+ T-cells, which in turn regulates TCR-mediated proliferation and IFNG and IL22 production. Plays a role in cell directional movement, cell orientation, cell sheet organization and Golgi complex polarization at the cell migration front. Promotes epithelial cell layer barrier function via maintaining cell-cell adhesion. Most probably functions in the establishment of apico-basal cell polarity. May function in cell proliferation regulating progression from G1 to S phase and as a positive regulator of apoptosis for instance during acinar morphogenesis of the mammary epithelium. May regulate cell invasion via MAPK-mediated cell migration and adhesion. May play a role in exocytosis and in the targeting of synaptic vesicles to synapses. Functions as an activator of Rac GTPase activity. This Homo sapiens (Human) protein is Protein scribble homolog.